The following is a 222-amino-acid chain: Octanoyltransferase (222 aa).

A BPL/LPL catalytic domain is found at 34–214; sequence GEKNSTVLIL…EFSKHDEALV (181 aa). Substrate is bound by residues 72-79, 144-146, and 157-159; these read RGGKLTWH, AIG, and GVA. The active-site Acyl-thioester intermediate is Cys175.

Belongs to the LipB family.

The protein resides in the cytoplasm. The enzyme catalyses octanoyl-[ACP] + L-lysyl-[protein] = N(6)-octanoyl-L-lysyl-[protein] + holo-[ACP] + H(+). The protein operates within protein modification; protein lipoylation via endogenous pathway; protein N(6)-(lipoyl)lysine from octanoyl-[acyl-carrier-protein]: step 1/2. Catalyzes the transfer of endogenously produced octanoic acid from octanoyl-acyl-carrier-protein onto the lipoyl domains of lipoate-dependent enzymes. Lipoyl-ACP can also act as a substrate although octanoyl-ACP is likely to be the physiological substrate. The protein is Octanoyltransferase of Paenarthrobacter aurescens (strain TC1).